The sequence spans 527 residues: Estrogen receptor beta (527 aa).

The modulating stretch occupies residues 1–145 (MDVKNSPSSL…SPSSKRDAHF (145 aa)). 2 positions are modified to phosphoserine; by MAPK: S84 and S102. NR C4-type zinc fingers lie at residues 146 to 166 (CAVC…CEGC) and 182 to 206 (CPAT…LRKC). A DNA-binding region (nuclear receptor) is located at residues 146–211 (CAVCSDYASG…RLRKCYEVGM (66 aa)). The 235-residue stretch at 261–495 (SPEQLVLTLL…DLLLEMLNAH (235 aa)) folds into the NR LBD domain. Residues 505 to 527 (TRSERNLAEDSESKEGSQKPQAQ) are disordered. Residues 506–521 (RSERNLAEDSESKEGS) are compositionally biased toward basic and acidic residues.

It belongs to the nuclear hormone receptor family. NR3 subfamily. In terms of assembly, binds DNA as a homodimer. Can form a heterodimer with ESR1. Interacts with NCOA1, NCOA3, NCOA5 and NCOA6 coactivators, leading to a strong increase of transcription of target genes. Interacts with UBE1C and AKAP13. Interacts with DNTTIP2. Interacts with CCDC62 in the presence of estradiol/E2; this interaction seems to enhance the transcription of target genes. Interacts with DNAAF4. Interacts with PRMT2. Interacts with CCAR2 (via N-terminus) in a ligand-independent manner. Interacts with RBM39, in the presence of estradiol (E2). Interacts with STUB1/CHIP. Phosphorylation at Ser-84 and Ser-102 recruits NCOA1.

The protein localises to the nucleus. Nuclear hormone receptor. Binds estrogens with an affinity similar to that of ESR1/ER-alpha, and activates expression of reporter genes containing estrogen response elements (ERE) in an estrogen-dependent manner. In Ovis aries (Sheep), this protein is Estrogen receptor beta (ESR2).